The sequence spans 94 residues: Co-chaperonin GroES (94 aa).

Belongs to the GroES chaperonin family. In terms of assembly, heptamer of 7 subunits arranged in a ring. Interacts with the chaperonin GroEL.

Its subcellular location is the cytoplasm. Functionally, together with the chaperonin GroEL, plays an essential role in assisting protein folding. The GroEL-GroES system forms a nano-cage that allows encapsulation of the non-native substrate proteins and provides a physical environment optimized to promote and accelerate protein folding. GroES binds to the apical surface of the GroEL ring, thereby capping the opening of the GroEL channel. The chain is Co-chaperonin GroES from Halothermothrix orenii (strain H 168 / OCM 544 / DSM 9562).